A 267-amino-acid polypeptide reads, in one-letter code: L-aspartate dehydrogenase (267 aa).

Positions 124 and 190 each coordinate NAD(+). The active site involves His218.

This sequence belongs to the L-aspartate dehydrogenase family.

The enzyme catalyses L-aspartate + NADP(+) + H2O = oxaloacetate + NH4(+) + NADPH + H(+). The catalysed reaction is L-aspartate + NAD(+) + H2O = oxaloacetate + NH4(+) + NADH + H(+). The protein operates within cofactor biosynthesis; NAD(+) biosynthesis; iminoaspartate from L-aspartate (dehydrogenase route): step 1/1. In terms of biological role, specifically catalyzes the NAD or NADP-dependent dehydrogenation of L-aspartate to iminoaspartate. The protein is L-aspartate dehydrogenase of Methanococcus maripaludis (strain C5 / ATCC BAA-1333).